The following is a 719-amino-acid chain: Protein Hook homolog 2 (719 aa).

Residues 1 to 161 (MSVDKAELCG…ELMTKDTPDS (161 aa)) form a required for localization to the centrosome and induction of aggresome formation region. The interval 1-548 (MSVDKAELCG…LKRKLEEHLQ (548 aa)) is sufficient for interaction with microtubules. The Calponin-homology (CH) domain occupies 6 to 122 (AELCGSLLTW…KLLQLVLGCA (117 aa)). Ser163 carries the phosphoserine modification. Coiled coils occupy residues 180–427 (LSEE…AQLQ) and 455–607 (AELR…VDKA). Thr230 carries the phosphothreonine modification. The required for localization to the centrosome and induction of aggresome formation stretch occupies residues 533–719 (DAISILLKRK…SLNLRPTDKH (187 aa)). A sufficient for interaction with CNTRL region spans residues 584–719 (HNLQKKDADL…SLNLRPTDKH (136 aa)). Residues 696–719 (LATNSRRGPLGRLASLNLRPTDKH) form a disordered region. Position 710 is a phosphoserine (Ser710).

This sequence belongs to the hook family. In terms of assembly, self-associates. Component of the FTS/Hook/FHIP complex (FHF complex), composed of AKTIP/FTS, FHIP1B, and one or more members of the Hook family of proteins HOOK1, HOOK2, and HOOK3. May interact directly with AKTIP/FTS, HOOK1 and HOOK3. Associates with several subunits of the homotypic vesicular sorting complex (the HOPS complex) including VPS16 and VPS41; these interactions may be indirect. Interacts with CNTRL. Interacts with microtubules. Interacts with ZC3H14. Interacts with LRGUK (via guanylate kinase-like domain). Interacts with CCDC181. Interacts with AP4M1; the interaction is direct, mediates the interaction between FTS-Hook-FHIP (FHF) complex and AP-4 and the perinuclear distribution of AP-4.

It is found in the cytoplasm. Its subcellular location is the cytoskeleton. It localises to the microtubule organizing center. The protein resides in the centrosome. The protein localises to the golgi apparatus. It is found in the trans-Golgi network. Its function is as follows. Component of the FTS/Hook/FHIP complex (FHF complex). The FHF complex may function to promote vesicle trafficking and/or fusion via the homotypic vesicular protein sorting complex (the HOPS complex). Contributes to the establishment and maintenance of centrosome function. May function in the positioning or formation of aggresomes, which are pericentriolar accumulations of misfolded proteins, proteasomes and chaperones. FHF complex promotes the distribution of AP-4 complex to the perinuclear area of the cell. The polypeptide is Protein Hook homolog 2 (HOOK2) (Homo sapiens (Human)).